Consider the following 148-residue polypeptide: Cuticle protein 8 (148 aa).

Tandem repeats lie at residues 16-19 (AAPA), Ala-22, 28-31 (AAPV), 37-40 (AAPA), and 44-47 (AAPV). A Chitin-binding type R&amp;R domain is found at 58 to 128 (YPKYEFNYGV…RTPGTHPVAV (71 aa)).

Its function is as follows. Component of the cuticle of migratory locust which contains more than 100 different structural proteins. The chain is Cuticle protein 8 from Locusta migratoria (Migratory locust).